The following is a 300-amino-acid chain: Ribosomal RNA small subunit methyltransferase H (300 aa).

S-adenosyl-L-methionine is bound by residues 46–48 (GGH), aspartate 65, phenylalanine 92, aspartate 107, and glutamine 114.

The protein belongs to the methyltransferase superfamily. RsmH family.

The protein localises to the cytoplasm. The catalysed reaction is cytidine(1402) in 16S rRNA + S-adenosyl-L-methionine = N(4)-methylcytidine(1402) in 16S rRNA + S-adenosyl-L-homocysteine + H(+). Specifically methylates the N4 position of cytidine in position 1402 (C1402) of 16S rRNA. The sequence is that of Ribosomal RNA small subunit methyltransferase H from Prochlorococcus marinus (strain MIT 9215).